The following is a 160-amino-acid chain: Transcriptional regulator MraZ (160 aa).

SpoVT-AbrB domains are found at residues 5-51 (TFEK…GKAL) and 80-123 (MAKL…EREA).

This sequence belongs to the MraZ family. In terms of assembly, forms oligomers.

The protein resides in the cytoplasm. The protein localises to the nucleoid. The chain is Transcriptional regulator MraZ from Phenylobacterium zucineum (strain HLK1).